The chain runs to 74 residues: MRIVLDAERCVGAGQCEATAPELFTQGDDGLGLVRDRPVTPELLGPAREAVDRCPVRAIRIESSVRTGWARGAG.

Positions 1 to 29 constitute a 4Fe-4S ferredoxin-type domain; it reads MRIVLDAERCVGAGQCEATAPELFTQGDD. Residues Cys10, Cys16, and Cys54 each contribute to the [3Fe-4S] cluster site.

[3Fe-4S] cluster serves as cofactor.

Its pathway is antibiotic biosynthesis; mycinamicin biosynthesis. In terms of biological role, specific electron transport protein capable of effectively supporting cytochrome P450 MycCI activity in the biosynthesis of mycinamicin, a 16-membered macrolide antibiotic. This is Ferredoxin MycCII from Micromonospora griseorubida.